We begin with the raw amino-acid sequence, 1600 residues long: E3 ubiquitin-protein ligase listerin (1600 aa).

HEAT repeat units follow at residues 31-65 (SSVP…CVKK), 114-150 (KTLP…DSDQ), 161-202 (GKLL…SSMA), 245-288 (YQLV…DLLR), 291-344 (ISVT…PDYA), 526-606 (RNYK…AALS), 853-904 (YTTN…DIRT), 962-986 (YASK…GAKF), 1045-1083 (LYNV…WVQT), 1289-1324 (VDVR…KADN), and 1325-1369 (SLNA…EEGT). The RING-type; degenerate zinc finger occupies 1537–1583 (CPICYAVVSADKKLPDKRCSTCNNLFHRLCLYKWFQNSNKNTCPLCR).

This sequence belongs to the LTN1 family. Component of the ribosome quality control complex (RQC), composed of the E3 ubiquitin ligase RKR1/LTN1, RQC1 and RQC2, as well as CDC48 and its ubiquitin-binding cofactors associated with the 60S ribosomal subunits.

It is found in the nucleus. Its subcellular location is the cytoplasm. The protein resides in the cytosol. The catalysed reaction is S-ubiquitinyl-[E2 ubiquitin-conjugating enzyme]-L-cysteine + [acceptor protein]-L-lysine = [E2 ubiquitin-conjugating enzyme]-L-cysteine + N(6)-ubiquitinyl-[acceptor protein]-L-lysine.. The protein operates within protein modification; protein ubiquitination. In terms of biological role, E3 ubiquitin-protein ligase component of the ribosome quality control complex (RQC), a ribosome-associated complex that mediates ubiquitination and extraction of incompletely synthesized nascent chains for proteasomal degradation. Mediates ubiquitination of proteins derived from mRNAs lacking stop codons (non-stop proteins) and other translation arrest products induced by poly-lysine sequences and tandem rare codons. Ubiquitination leads to CDC48 recruitment for extraction and degradation of the incomplete translation product. May indirectly play a role in chromatin function and transcription. This Neurospora crassa (strain ATCC 24698 / 74-OR23-1A / CBS 708.71 / DSM 1257 / FGSC 987) protein is E3 ubiquitin-protein ligase listerin (rkr-1).